The sequence spans 130 residues: Protein ApaG (130 aa).

The ApaG domain occupies arginine 3–arginine 127.

The sequence is that of Protein ApaG from Bradyrhizobium diazoefficiens (strain JCM 10833 / BCRC 13528 / IAM 13628 / NBRC 14792 / USDA 110).